The chain runs to 91 residues: UPF0298 protein M28_Spy0318 (91 aa).

It belongs to the UPF0298 family.

The protein localises to the cytoplasm. In Streptococcus pyogenes serotype M28 (strain MGAS6180), this protein is UPF0298 protein M28_Spy0318.